The following is a 380-amino-acid chain: Queuine tRNA-ribosyltransferase (380 aa).

The active-site Proton acceptor is D96. Substrate is bound by residues 96-100 (DSGGF), D150, Q193, and G220. Positions 251–257 (GVGAPDS) are RNA binding. The active-site Nucleophile is D270. The segment at 275–279 (TRIAR) is RNA binding; important for wobble base 34 recognition. 4 residues coordinate Zn(2+): C308, C310, C313, and H339.

It belongs to the queuine tRNA-ribosyltransferase family. As to quaternary structure, homodimer. Within each dimer, one monomer is responsible for RNA recognition and catalysis, while the other monomer binds to the replacement base PreQ1. Requires Zn(2+) as cofactor.

The catalysed reaction is 7-aminomethyl-7-carbaguanine + guanosine(34) in tRNA = 7-aminomethyl-7-carbaguanosine(34) in tRNA + guanine. The protein operates within tRNA modification; tRNA-queuosine biosynthesis. In terms of biological role, catalyzes the base-exchange of a guanine (G) residue with the queuine precursor 7-aminomethyl-7-deazaguanine (PreQ1) at position 34 (anticodon wobble position) in tRNAs with GU(N) anticodons (tRNA-Asp, -Asn, -His and -Tyr). Catalysis occurs through a double-displacement mechanism. The nucleophile active site attacks the C1' of nucleotide 34 to detach the guanine base from the RNA, forming a covalent enzyme-RNA intermediate. The proton acceptor active site deprotonates the incoming PreQ1, allowing a nucleophilic attack on the C1' of the ribose to form the product. After dissociation, two additional enzymatic reactions on the tRNA convert PreQ1 to queuine (Q), resulting in the hypermodified nucleoside queuosine (7-(((4,5-cis-dihydroxy-2-cyclopenten-1-yl)amino)methyl)-7-deazaguanosine). This chain is Queuine tRNA-ribosyltransferase, found in Streptococcus equi subsp. zooepidemicus (strain H70).